A 762-amino-acid chain; its full sequence is Mediator of RNA polymerase II transcription subunit 15 (762 aa).

3 disordered regions span residues 70 to 102, 311 to 330, and 406 to 494; these read AQQAQQDGGGNSSQQGGGGGGGGSGMPDPINAL, GVGHGGPAMQQQQQAGGMGP, and GSGG…LNPQ. A compositionally biased stretch (gly residues) spans 76-94; the sequence is DGGGNSSQQGGGGGGGGSG. Residues 465–481 are compositionally biased toward polar residues; sequence QRSTIGQSPGGSLNTPG.

The protein belongs to the Mediator complex subunit 15 family. As to quaternary structure, component of the Mediator complex.

It localises to the nucleus. Component of the Mediator complex, a coactivator involved in the regulated transcription of nearly all RNA polymerase II-dependent genes. Mediator functions as a bridge to convey information from gene-specific regulatory proteins to the basal RNA polymerase II transcription machinery. Mediator is recruited to promoters by direct interactions with regulatory proteins and serves as a scaffold for the assembly of a functional preinitiation complex with RNA polymerase II and the general transcription factors. This Anopheles gambiae (African malaria mosquito) protein is Mediator of RNA polymerase II transcription subunit 15 (MED15).